The sequence spans 573 residues: uncharacterized protein (573 aa).

Residues 15 to 298 (AGIALILMLT…FPFLIMIFTR (284 aa)) form the ABC transmembrane type-1 domain. A run of 6 helical transmembrane segments spans residues 17 to 37 (IALI…LLIA), 52 to 72 (VWIW…AGML), 127 to 147 (IFMS…GIVL), 153 to 173 (VKLG…LLWV), 238 to 258 (FTMP…LWAG), and 275 to 295 (IINY…LIMI). An ABC transporter domain is found at 330-563 (IEFQHVSFRY…SQLYKRIYES (234 aa)). Residue 364–371 (GATGSGKS) participates in ATP binding.

This sequence belongs to the ABC transporter superfamily.

The protein localises to the cell membrane. This is an uncharacterized protein from Bacillus subtilis (strain 168).